A 103-amino-acid polypeptide reads, in one-letter code: Histone H4 (103 aa).

Positions 1-14 are enriched in gly residues; that stretch reads MSGRGKGGKGLGKG. A disordered region spans residues 1–20; the sequence is MSGRGKGGKGLGKGGAKRHR. N-acetylserine is present on Ser2. 2 positions are modified to N6-acetyl-N6-methyllysine; alternate: Lys6 and Lys13. An N6-acetyllysine modification is found at Lys17. The DNA-binding element occupies 17-21; the sequence is KRHRK. Lys21 carries the N6-methyllysine modification.

Belongs to the histone H4 family. In terms of assembly, the nucleosome is a histone octamer containing two molecules each of H2A, H2B, H3 and H4 assembled in one H3-H4 heterotetramer and two H2A-H2B heterodimers. The octamer wraps approximately 147 bp of DNA.

Its subcellular location is the nucleus. The protein resides in the chromosome. In terms of biological role, core component of nucleosome. Nucleosomes wrap and compact DNA into chromatin, limiting DNA accessibility to the cellular machineries which require DNA as a template. Histones thereby play a central role in transcription regulation, DNA repair, DNA replication and chromosomal stability. DNA accessibility is regulated via a complex set of post-translational modifications of histones, also called histone code, and nucleosome remodeling. The chain is Histone H4 (H4DEKL) from Dendronephthya klunzingeri (Klunzinger's soft coral).